Consider the following 3071-residue polypeptide: Intermembrane lipid transfer protein vps1301 (3071 aa).

In terms of domain architecture, Chorein N-terminal spans 2–115; that stretch reads LEGLVAGLLN…QQALKQEQLD (114 aa). In terms of domain architecture, SHR-BD spans 2143–2415; that stretch reads HIEIFSPYII…KYSWDYPCCA (273 aa).

This sequence belongs to the VPS13 family.

The protein localises to the golgi apparatus. It localises to the trans-Golgi network. Its function is as follows. Mediates the transfer of lipids between membranes at organelle contact sites. May play a role in mitochondrial lipid homeostasis, Golgi vesicle transport, reticulophagy, actin cytoskeleton organization and formation of the forespore membrane. The sequence is that of Intermembrane lipid transfer protein vps1301 from Schizosaccharomyces pombe (strain 972 / ATCC 24843) (Fission yeast).